A 1576-amino-acid chain; its full sequence is ABC transporter ALT5 (1576 aa).

Helical transmembrane passes span 27-47 (LKFE…ILAV), 72-92 (ILGF…TQGT), 99-119 (GLFL…VIVC), 267-287 (LPLS…PILP), 289-309 (LVLI…TGFL), 321-341 (GLIG…SLYW), 387-407 (VLAG…AVIV), 417-437 (GFFA…ATVG), 500-520 (ITAM…TLAA), and 525-545 (VATS…APLG). The region spanning 289 to 556 (LVLIGLSISQ…LFQSVAPLMS (268 aa)) is the ABC transmembrane type-1 1 domain. The 233-residue stretch at 602 to 834 (FRVVNGSFRW…NGGYLQSLCV (233 aa)) folds into the ABC transporter 1 domain. Residue 636 to 643 (GPVGSGKS) participates in ATP binding. Helical transmembrane passes span 915–935 (VVAL…FAFP), 957–977 (FWVG…FLTM), 981–1001 (VTSI…AAIM), 1035–1054 (LIQF…VLAA), 1060–1078 (AAMY…KLYL), 1142–1162 (WLLF…VTLV), and 1171–1191 (GFAG…ASAM). Residues 919 to 1199 (VAFLASAICY…AMQSYAKLET (281 aa)) form the ABC transmembrane type-1 2 domain. The region spanning 1236 to 1567 (IKLDGVSASY…SHSKFRALCE (332 aa)) is the ABC transporter 2 domain. 1278–1285 (GRSGSGKS) is a binding site for ATP.

It belongs to the ABC transporter superfamily. ABCC family. Conjugate transporter (TC 3.A.1.208) subfamily.

The protein localises to the cell membrane. In terms of biological role, ABC transporter that may provide the dual role AAL-toxin export and self-protection by allowing the fungus to evade the harmful effect of its own AAL-toxin production. The sequence is that of ABC transporter ALT5 from Alternaria alternata (Alternaria rot fungus).